The chain runs to 101 residues: Small ribosomal subunit protein eS24 (101 aa).

It belongs to the eukaryotic ribosomal protein eS24 family.

This chain is Small ribosomal subunit protein eS24, found in Methanosarcina mazei (strain ATCC BAA-159 / DSM 3647 / Goe1 / Go1 / JCM 11833 / OCM 88) (Methanosarcina frisia).